A 225-amino-acid chain; its full sequence is Platelet-activating factor acetylhydrolase IB subunit beta homolog (225 aa).

Belongs to the 'GDSL' lipolytic enzyme family. Platelet-activating factor acetylhydrolase IB beta/gamma subunits subfamily. As to quaternary structure, does not interact with Lis-1.

In Drosophila melanogaster (Fruit fly), this protein is Platelet-activating factor acetylhydrolase IB subunit beta homolog (Paf-AHalpha).